The chain runs to 501 residues: Tetrachloroethene reductive dehalogenase (501 aa).

A signal peptide (tat-type signal) is located at residues 1 to 37 (MEKKKKPELSRRDFGKLIIGGGAAATIAPFGVPGANA). Residues alanine 74, tyrosine 207, 309 to 314 (NGVGQS), 329 to 332 (MGAC), and 341 to 343 (VRL) each bind corrinoid. In terms of domain architecture, 4Fe-4S ferredoxin-type 1 spans 356–386 (KPIDFGVTEFCETCKKCARECPSKAITEGPR). The [4Fe-4S] cluster site is built by cysteine 366, cysteine 369, cysteine 372, and cysteine 376. 394 to 401 (HNQSGKLQ) contributes to the corrinoid binding site. Cysteine 409 contributes to the [4Fe-4S] cluster binding site. Tyrosine 419 is a corrinoid binding site. [4Fe-4S] cluster contacts are provided by cysteine 420, cysteine 423, and cysteine 427. The region spanning 420 to 439 (CGVCVAVCPFTKGNIWIHDG) is the 4Fe-4S ferredoxin-type 2 domain.

The protein belongs to the PceA family. As to quaternary structure, monomer. The cofactor is [4Fe-4S] cluster. Corrinoid is required as a cofactor. In terms of processing, predicted to be exported by the Tat system. The position of the signal peptide cleavage has not been experimentally proven.

The protein resides in the cytoplasm. Its subcellular location is the cell inner membrane. The catalysed reaction is trichloroethene + chloride + A + H(+) = tetrachloroethene + AH2. The enzyme catalyses trichloroethene + AH2 = (Z)-1,2-dichloroethene + chloride + A + H(+). Both the processed and unprocessed enzymes are catalytically active. PCE-dependent growth and PceA activity are inhibited in the presence of high concentrations of 5,6-dimethylbenzimidazole (DMB), probably due to the formation a DMB-containing nor-B12 cofactor. Dechlorination of PCE is stimulated by ammonium ions. Activity is inhibited by chlorinated methanes. Its function is as follows. Catalyzes the reductive dechlorination of tetrachloroethene (PCE) to trichloroethene (TCE) and of trichloroethene to cis-1,2-dichloroethene (DCE). In addition, trans-1,3-dichloropropene, 1,1,3-trichloropropene and 2,3-dichloropropene are reduced to a mixture of mono-chloropropenes, 1,1-dichloropropene, and 2-chloropropene, respectively. Is also able to convert brominated phenols such as 4-bromophenol (4-BP), 2,4-dibromophenol (2,4-DBP) and 2,4,6-tribromophenol (2,4,6-TBP). Utilizes formate or pyruvate as electron donors. Titanium(III) citrate could also serve as electron donor. Reduced methyl viologen can act as the artificial electron donor. This chain is Tetrachloroethene reductive dehalogenase, found in Sulfurospirillum multivorans (Dehalospirillum multivorans).